The primary structure comprises 231 residues: Large ribosomal subunit protein uL1 (231 aa).

Belongs to the universal ribosomal protein uL1 family. Part of the 50S ribosomal subunit.

Its function is as follows. Binds directly to 23S rRNA. The L1 stalk is quite mobile in the ribosome, and is involved in E site tRNA release. Protein L1 is also a translational repressor protein, it controls the translation of the L11 operon by binding to its mRNA. This chain is Large ribosomal subunit protein uL1, found in Nitrosococcus oceani (strain ATCC 19707 / BCRC 17464 / JCM 30415 / NCIMB 11848 / C-107).